The sequence spans 157 residues: Methylglyoxal synthase (157 aa).

The MGS-like domain occupies 1–157; that stretch reads MSKVKNIAVV…DFSSYTQRKL (157 aa). Substrate-binding positions include His12, Lys16, 38–41, and 71–72; these read TGTT and SG. The active-site Proton donor/acceptor is Asp77. A substrate-binding site is contributed by His104.

Belongs to the methylglyoxal synthase family.

It catalyses the reaction dihydroxyacetone phosphate = methylglyoxal + phosphate. In terms of biological role, catalyzes the formation of methylglyoxal from dihydroxyacetone phosphate. The polypeptide is Methylglyoxal synthase (Maridesulfovibrio salexigens (strain ATCC 14822 / DSM 2638 / NCIMB 8403 / VKM B-1763) (Desulfovibrio salexigens)).